The following is a 235-amino-acid chain: MKDLLQYAACFLAIFSTGFLIVATWTDCWMVNADDSLEVSTKCRGLWWECVTNAFDGIRTCDEYDSIYAEHPLKLVVTRALMITADILAGFGFITLLLGLDCVKFLPDDPQIKVRLCFVAGTTLLIAGTPGIIGSVWYAVDVYVERSSLVLHNIFLGIQYKFGWSCWLGMAGSLGCFLAGALLTCCLYLFKDVGPERNYPYAMRKPYSTAGVSMAKSYKAPRTETAKMYAVDTRV.

Residues 1-3 (MKD) lie on the Cytoplasmic side of the membrane. Residues 4-24 (LLQYAACFLAIFSTGFLIVAT) traverse the membrane as a helical segment. Residues 25 to 79 (WTDCWMVNADDSLEVSTKCRGLWWECVTNAFDGIRTCDEYDSIYAEHPLKLVVTR) are Extracellular-facing. The chain crosses the membrane as a helical span at residues 80–100 (ALMITADILAGFGFITLLLGL). The Cytoplasmic segment spans residues 101–115 (DCVKFLPDDPQIKVR). A helical membrane pass occupies residues 116–136 (LCFVAGTTLLIAGTPGIIGSV). The Extracellular portion of the chain corresponds to 137 to 169 (WYAVDVYVERSSLVLHNIFLGIQYKFGWSCWLG). Residues 170 to 190 (MAGSLGCFLAGALLTCCLYLF) form a helical membrane-spanning segment. At 191 to 235 (KDVGPERNYPYAMRKPYSTAGVSMAKSYKAPRTETAKMYAVDTRV) the chain is on the cytoplasmic side. The Interaction with TJP1 motif lies at 233–235 (TRV).

Belongs to the claudin family. Can form heteropolymeric tight junction strands with other claudins. Interacts with CLDN19. Cannot form tight junction strands on its own. Interacts (via PDZ-binding motif TRV) with TJP1 (via PDZ domain). Expressed in the corticomedullary axis of the TAL, specifically in the cortex and the outer stripe of outer medulla (OSOM) zone (at protein level).

Its subcellular location is the cell junction. The protein resides in the tight junction. It localises to the cell membrane. It catalyses the reaction Mg(2+)(in) = Mg(2+)(out). The enzyme catalyses Ca(2+)(in) = Ca(2+)(out). The catalysed reaction is Na(+)(in) = Na(+)(out). It carries out the reaction K(+)(in) = K(+)(out). It catalyses the reaction Rb(+)(in) = Rb(+)(out). The enzyme catalyses Cs(+)(in) = Cs(+)(out). The catalysed reaction is Li(+)(in) = Li(+)(out). In terms of biological role, forms paracellular channels: coassembles with CLDN19 into tight junction strands with cation-selective channels through the strands, conveying epithelial permeability in a process known as paracellular tight junction permeability. Involved in the maintenance of ion gradients along the nephron. In the thick ascending limb (TAL) of Henle's loop, facilitates sodium paracellular permeability from the interstitial compartment to the lumen, contributing to the lumen-positive transepithelial potential that drives paracellular magnesium and calcium reabsorption. The polypeptide is Claudin-16 (Mus musculus (Mouse)).